The following is a 215-amino-acid chain: Riboflavin synthase (215 aa).

Lumazine-binding repeat units follow at residues 1–96 (MFTG…FGGH) and 97–193 (FVSG…YRFL). 2,4-dihydroxypteridine contacts are provided by residues 4–6 (GIV), 47–49 (CLT), 61–66 (DVMPET), 100–102 (GHV), Lys-135, 144–146 (SST), and 158–163 (SVIPHT).

Homotrimer.

It carries out the reaction 2 6,7-dimethyl-8-(1-D-ribityl)lumazine + H(+) = 5-amino-6-(D-ribitylamino)uracil + riboflavin. The protein operates within cofactor biosynthesis; riboflavin biosynthesis; riboflavin from 2-hydroxy-3-oxobutyl phosphate and 5-amino-6-(D-ribitylamino)uracil: step 2/2. Catalyzes the dismutation of two molecules of 6,7-dimethyl-8-ribityllumazine, resulting in the formation of riboflavin and 5-amino-6-(D-ribitylamino)uracil. The chain is Riboflavin synthase (ribE) from Bacillus amyloliquefaciens (Bacillus velezensis).